The chain runs to 409 residues: LIM/homeobox protein ttx-3 (409 aa).

2 LIM zinc-binding domains span residues 108–169 (NQCC…RYQK) and 171–232 (CRKC…VRST). Disordered regions lie at residues 245–299 (AVVA…RTSF) and 372–409 (MNPP…YTHL). Pro residues predominate over residues 247–267 (VAPPPPPPTTTTAPPPAAPEQ). Positions 292–351 (SKRMRTSFKHHQLRAMKTYFALNHNPDAKDLKQLAAKTNLTKRVLQVWFQNARAKYRREL) form a DNA-binding region, homeobox. The span at 382 to 409 (GHSTDGYQLNTPPLSSEIYSPNSNYTHL) shows a compositional bias: polar residues.

In terms of tissue distribution, expressed in the AIA, AIN and AIY interneurons, and in the NSM neurons. Expressed also in ADL and ASI sensory neurons in 60-70% of L2 larvae. Expression is also detected in head muscles of embryos and some early larvae but not late larvae or adults.

The protein localises to the nucleus. The protein resides in the perikaryon. It localises to the cell projection. Its subcellular location is the axon. In terms of biological role, transcription factor. Binds to a sequence motif, 5'-TTATTGGCTTCGTTAA-3', which may be involved in AIY interneuron function, in the regulatory elements of target genes; binding is more efficient, in vitro, together with homeobox protein ceh-10. Required for specification of the AIA and AIY interneurons and the NSM neurons. Positively regulates the expression of a number of genes including ceh-10, ceh-23, kal-1, hen-1, ser-2, unc-17 and sra-11 in AIY neurons, and cat-4, flp-4, bas-1, ptps-1 and mgl-1 in NSM neurons. In concert with WNT/beta-catenin signaling, initiates expression of homeobox ceh-10 in AIY, but not in the sister cells, SMDD motor neurons. Also acts in an autoregulatory feedback loop to maintain its own expression. Plays a role in the thermotactic response, olfactory imprinting, regulation of longevity, control of dauer formation and axon outgrowth and pathfinding. Not required for normal chemosensory behavior. In Caenorhabditis elegans, this protein is LIM/homeobox protein ttx-3.